The sequence spans 199 residues: Large ribosomal subunit protein bL9 (199 aa).

The tract at residues 153–199 is disordered; the sequence is KPVKASEKKGRRPRRDEEASDEQILAEENSVTEEAVSEEIQNSESEN.

Belongs to the bacterial ribosomal protein bL9 family.

Binds to the 23S rRNA. This Treponema denticola (strain ATCC 35405 / DSM 14222 / CIP 103919 / JCM 8153 / KCTC 15104) protein is Large ribosomal subunit protein bL9.